Here is a 926-residue protein sequence, read N- to C-terminus: Centrosomal protein of 104 kDa (926 aa).

Residues 212-279 (EVAQIIRRLD…DLAKEKKQQM (68 aa)) adopt a coiled-coil conformation. Residues 345–419 (LQEKPSASSP…RGVAGEPEPL (75 aa)) form a disordered region. Residues 398–409 (AEVKEADSDVRR) show a composition bias toward basic and acidic residues. HEAT repeat units lie at residues 522–558 (THCVERAFPLLLARAGDSSARLRVMALNFIQEMALFK) and 603–639 (GFTVDNVMKFAVSALEHRVYEVRETAVRIILDMYRQH). Positions 678-730 (EAEVRAQKRVATKEAEKQKKEEMKALQGQSGELRETQAGVQEKESEAVKLRNQ) form a coiled coil. 2 stretches are compositionally biased toward basic and acidic residues: residues 690 to 701 (KEAEKQKKEEMK) and 718 to 729 (QEKESEAVKLRN). Disordered regions lie at residues 690-741 (KEAE…VLPD) and 885-926 (APQQ…YMRR). Low complexity predominate over residues 889–903 (GKGPAAAKSSTSAPK). The span at 916-926 (SKSSSRTYMRR) shows a compositional bias: polar residues.

As to quaternary structure, interacts with CCP110 and CEP97. Interacts with ARMC9, TOGARAM1, CCDC66 and CSPP1.

The protein localises to the cell projection. The protein resides in the cilium. Its subcellular location is the cytoplasm. It localises to the cytoskeleton. It is found in the microtubule organizing center. The protein localises to the centrosome. The protein resides in the centriole. Its subcellular location is the spindle pole. In terms of biological role, required for ciliogenesis and for structural integrity at the ciliary tip. In Mus musculus (Mouse), this protein is Centrosomal protein of 104 kDa (Cep104).